Here is a 606-residue protein sequence, read N- to C-terminus: MFCDQDMYEIPADCQVLVDKTVIEFDGTTVLCRVCGDKASGFHYGVHSCEGCKGFFRRSIQQKIQYRPCTKNQQCSILRINRNRCQYCRLKKCIAVGMSRDAVRFGRVPKREKAKILAAMQSVNAKSQERAVLAELEDDTRVTAAIIRAHMDTCDFTRDKVAPMLQQARTHPSYTQCPPYLACPLNPRPVPLHGQQELVQDFSEALLPAIRGVVEFAKRLPGFQQLPQEDQVTLLKAGVFEVLLVRLAGMFDARTNAMLCLNGQLVRREALHTSVNARFLMDSMFDFAERVNSLALNDAELALFCAVVVLAPDRPGLRNAELVERVHRRLVNCLQAVVSKHHPENPNLQRDLLSKIPDLRTLNTLHSEKLLKYKMTEHTAAGAPWDDSRSSWSMEQESSVGSPSSSYTTDEAMRSPVSCSESICSGESASSGESLCGSEVSGYTELRPPFPLARRRHDHSEGASSGDEATESPLKCPFSKRKSDSPDDSGIESGTDRSDKLSSPSVCSSPRSSIDEKERGGPARTICRCCARLQRRPSSTRICSWRKPTTSPIKSSVRNVGKRSLTPHSPPPPRSWSRRCLSLHSTRALWLRHTPPWPPVWRRPLA.

Residues 29-105 constitute a DNA-binding region (nuclear receptor); that stretch reads TVLCRVCGDK…VGMSRDAVRF (77 aa). 2 NR C4-type zinc fingers span residues 32-52 and 69-93; these read CRVC…CEGC and CTKN…LKKC. The 255-residue stretch at 138 to 392 folds into the NR LBD domain; sequence DDTRVTAAII…APWDDSRSSW (255 aa). Disordered stretches follow at residues 382–413, 454–519, and 546–576; these read GAPW…DEAM, RRRH…EKER, and RKPT…PRSW. Low complexity-rich tracts occupy residues 390-406 and 501-512; these read SSWS…PSSS and LSSPSVCSSPRS. The span at 546-558 shows a compositional bias: polar residues; the sequence is RKPTTSPIKSSVR.

Belongs to the nuclear hormone receptor family. NR1 subfamily. As to expression, expressed in the epidermis, eyestalk and the nerve cord of the pre-molt shrimp.

It localises to the nucleus. This chain is Nuclear hormone receptor E75 (E75), found in Metapenaeus ensis (Greasyback shrimp).